Reading from the N-terminus, the 440-residue chain is Gap junction alpha-8 protein (440 aa).

The stretch at glycine 2 to glutamate 12 is an intramembrane region. Over glutamate 13 to isoleucine 21 the chain is Cytoplasmic. Residues glycine 22–glutamate 42 form a helical membrane-spanning segment. Residues phenylalanine 43–proline 71 lie on the Extracellular side of the membrane. Intrachain disulfides connect cysteine 54-cysteine 201, cysteine 61-cysteine 195, and cysteine 65-cysteine 190. The helical transmembrane segment at isoleucine 72 to tyrosine 92 threads the bilayer. The Cytoplasmic portion of the chain corresponds to valine 93–histidine 161. The tract at residues alanine 111–lysine 143 is disordered. Residues isoleucine 162 to phenylalanine 182 traverse the membrane as a helical segment. The Extracellular portion of the chain corresponds to arginine 183–threonine 210. The helical transmembrane segment at isoleucine 211–methionine 231 threads the bilayer. Over serine 232 to isoleucine 440 the chain is Cytoplasmic. Residues valine 338–isoleucine 440 form a disordered region. Composition is skewed to basic and acidic residues over residues valine 353–alanine 364 and proline 374–threonine 399. A compositionally biased stretch (low complexity) spans leucine 423–arginine 432.

Belongs to the connexin family. Alpha-type (group II) subfamily. A hemichannel or connexon is composed of a hexamer of connexins. A functional gap junction is formed by the apposition of two hemichannels. Forms heteromeric channels with GJA3. Detected in eye lens (at protein level). Eye lens.

It localises to the cell membrane. Its subcellular location is the cell junction. It is found in the gap junction. Functionally, structural component of eye lens gap junctions. Gap junctions are dodecameric channels that connect the cytoplasm of adjoining cells. They are formed by the docking of two hexameric hemichannels, one from each cell membrane. Small molecules and ions diffuse from one cell to a neighboring cell via the central pore. This chain is Gap junction alpha-8 protein (Gja8), found in Mus musculus (Mouse).